Here is a 303-residue protein sequence, read N- to C-terminus: Protein bottleneck (303 aa).

Disordered regions lie at residues 102-142 and 185-272; these read SKRN…PTVT and VATT…ASVR. Composition is skewed to low complexity over residues 115 to 138 and 185 to 197; these read RQQEQRQPQEQPLQQEELQHQQQE and VATTTANSSTANS. Polar residues predominate over residues 260–272; that stretch reads ATISRQSSSASVR.

Restricted to the blastoderm.

The protein resides in the cytoplasm. It localises to the cytoskeleton. In terms of biological role, acts as a regulator of the microfilament network governing cellularization of the embryo. Determines the timing of a key conformational transition in the cortical microfilament network: the proper coordination of membrane invagination and basal closure of the cells. To do this, bnk possibly physically links neighboring contractile units of the early cycle 14 microfilament network in a manner that prevents basal constriction until the proper stage has been reached. Bnk together with nullo and Sry-alpha may provide auxiliary functions, by acting both to stabilize a large and dynamic microfilament structure and regulate its functions. This Drosophila melanogaster (Fruit fly) protein is Protein bottleneck (bnk).